We begin with the raw amino-acid sequence, 410 residues long: Chitin deacetylase 3 (410 aa).

The N-terminal stretch at Met-1–Ala-18 is a signal peptide. A propeptide spanning residues Ala-19–Arg-39 is cleaved from the precursor. N-linked (GlcNAc...) asparagine glycosylation is found at Asn-61 and Asn-80. The NodB homology domain maps to Lys-124–Lys-314. Asp-131 serves as the catalytic Proton acceptor. Asp-131 provides a ligand contact to acetate. Asp-132 provides a ligand contact to Co(2+). An N-linked (GlcNAc...) asparagine glycan is attached at Asn-149. Co(2+)-binding residues include His-183 and His-187. Acetate is bound at residue Tyr-225. Residue Asn-279 is glycosylated (N-linked (GlcNAc...) asparagine). His-289 (proton donor) is an active-site residue. An N-linked (GlcNAc...) asparagine glycan is attached at Asn-293. Ser-385 carries the GPI-anchor amidated serine lipid modification. Residues Ser-386–Val-410 constitute a propeptide, removed in mature form.

This sequence belongs to the polysaccharide deacetylase family. It depends on Co(2+) as a cofactor.

The protein resides in the cell membrane. The enzyme catalyses [(1-&gt;4)-N-acetyl-beta-D-glucosaminyl](n) + n H2O = chitosan + n acetate. Hydrolyzes the N-acetamido groups of N-acetyl-D-glucosamine residues in chitin to form chitosan and acetate. Chitosan is required to anchor melanin to the cell wall, for maintenance of cell wall integrity, and for proper cytokinesis. Chitosan offers an advantage during infection as it is less readily detected than chitin by host immunosurveillance mechanisms. This is Chitin deacetylase 3 from Cryptococcus neoformans var. neoformans serotype D (strain B-3501A) (Filobasidiella neoformans).